Here is a 340-residue protein sequence, read N- to C-terminus: DNA-directed RNA polymerase subunit alpha (340 aa).

Residues 1-226 (MLIAQRPSLT…ELFGLARELN (226 aa)) form an alpha N-terminal domain (alpha-NTD) region. Residues 243 to 340 (LAADLALPIE…DAGFVETEQY (98 aa)) are alpha C-terminal domain (alpha-CTD).

This sequence belongs to the RNA polymerase alpha chain family. In terms of assembly, homodimer. The RNAP catalytic core consists of 2 alpha, 1 beta, 1 beta' and 1 omega subunit. When a sigma factor is associated with the core the holoenzyme is formed, which can initiate transcription.

The enzyme catalyses RNA(n) + a ribonucleoside 5'-triphosphate = RNA(n+1) + diphosphate. Functionally, DNA-dependent RNA polymerase catalyzes the transcription of DNA into RNA using the four ribonucleoside triphosphates as substrates. This Streptomyces avermitilis (strain ATCC 31267 / DSM 46492 / JCM 5070 / NBRC 14893 / NCIMB 12804 / NRRL 8165 / MA-4680) protein is DNA-directed RNA polymerase subunit alpha.